Consider the following 151-residue polypeptide: UPF0179 protein MJ1627 (151 aa).

This sequence belongs to the UPF0179 family.

This chain is UPF0179 protein MJ1627, found in Methanocaldococcus jannaschii (strain ATCC 43067 / DSM 2661 / JAL-1 / JCM 10045 / NBRC 100440) (Methanococcus jannaschii).